Reading from the N-terminus, the 387-residue chain is Phosphoglycerate kinase (387 aa).

Substrate-binding positions include 21 to 23 (DLN), Arg36, 59 to 62 (HLGR), Arg113, and Arg146. ATP-binding positions include Lys197, Glu314, and 340–343 (GGDT).

It belongs to the phosphoglycerate kinase family. Monomer.

The protein localises to the cytoplasm. The enzyme catalyses (2R)-3-phosphoglycerate + ATP = (2R)-3-phospho-glyceroyl phosphate + ADP. It participates in carbohydrate degradation; glycolysis; pyruvate from D-glyceraldehyde 3-phosphate: step 2/5. The protein is Phosphoglycerate kinase of Aeromonas salmonicida (strain A449).